Here is a 144-residue protein sequence, read N- to C-terminus: MKIVDANVLLYAVNTTSEHHKPSLRWLDGALSGADRVGFAWVPLLAFVRLATKVGLFPRPLPREAAITQVADWLAAPSAVLVNPTVRHADILARMLTYVGTGANLVNDAHLAALAVEHRASIVSYDSDFGRFEGVRWDQPPALL.

A PINc domain is found at 3–137; it reads IVDANVLLYA…DFGRFEGVRW (135 aa). The Mg(2+) site is built by Asp-5 and Asp-90.

This sequence belongs to the PINc/VapC protein family. Mg(2+) is required as a cofactor.

It localises to the secreted. In terms of biological role, probable toxic component of a type II toxin-antitoxin (TA) system. An RNase. Upon expression in M.smegmatis inhibits colony formation. The putative cognate antitoxin is VapB37. The protein is Ribonuclease VapC37 of Mycobacterium tuberculosis (strain ATCC 25618 / H37Rv).